We begin with the raw amino-acid sequence, 159 residues long: Cytochrome P450 monooxygenase aunB (159 aa).

Cys-134 is a binding site for heme.

This sequence belongs to the cytochrome P450 family. Heme is required as a cofactor.

It catalyses the reaction 2 fonsecin B + NADPH + O2 + H(+) = aurasperone B + NADP(+) + 2 H2O. It carries out the reaction 2 rubrofusarin B + NADPH + O2 + H(+) = aurasperone A + NADP(+) + 2 H2O. Its pathway is secondary metabolite biosynthesis. Its function is as follows. Cytochrome P450 monooxygenase; part of the gene cluster that mediates the biosynthesis of aurasperone B, a dimeric gamma-naphthopyrone. The first step in the biosynthesis of aurasperone B is the production of gamma-naphthopyrone precursor YWA1 by the non-reducing polyketide synthase albA, via condensation of one acetyl-CoA starter unit with 6 malonyl-CoA units. YWA1 is then methylated by aunE at position C-6 to yield foncesin which is further methylated at position C-8 by aunD to produce fonsecin B. A key enzyme in the biosynthetic pathway is the cytochrome P450 monooxygenase aunB which catalyzes the oxidative dimerization of fonsecin B to aurasperone B. AunB also catalyzes the oxidative dimerization of rubrofusarin B into aurasperone A. In Aspergillus niger (strain ATCC 1015 / CBS 113.46 / FGSC A1144 / LSHB Ac4 / NCTC 3858a / NRRL 328 / USDA 3528.7), this protein is Cytochrome P450 monooxygenase aunB.